Here is a 207-residue protein sequence, read N- to C-terminus: Probable GTP-binding protein EngB (207 aa).

The 181-residue stretch at 23-203 (GAPEVCFVGR…GAHIENWISP (181 aa)) folds into the EngB-type G domain. GTP contacts are provided by residues 31–38 (GRSNAGKS), 58–62 (GRTRL), 83–86 (DLPG), 150–153 (TKAD), and 182–184 (FSS). Residues Ser-38 and Thr-60 each coordinate Mg(2+).

This sequence belongs to the TRAFAC class TrmE-Era-EngA-EngB-Septin-like GTPase superfamily. EngB GTPase family. Mg(2+) serves as cofactor.

In terms of biological role, necessary for normal cell division and for the maintenance of normal septation. The chain is Probable GTP-binding protein EngB from Bordetella bronchiseptica (strain ATCC BAA-588 / NCTC 13252 / RB50) (Alcaligenes bronchisepticus).